A 69-amino-acid chain; its full sequence is Disintegrin EMF10A (69 aa).

The 66-residue stretch at 1-66 (MNSANPCCDP…DCPRNPWKSE (66 aa)) folds into the Disintegrin domain. Disulfide bonds link Cys-7/Cys-30, Cys-21/Cys-27, Cys-26/Cys-51, and Cys-39/Cys-58. The Cell attachment site signature appears at 43–45 (RGD).

This sequence belongs to the disintegrin family. Dimeric disintegrin subfamily. Heterodimer with EMF10B; disulfide-linked. As to expression, expressed by the venom gland.

It localises to the secreted. Extremely potent and selective inhibitor of integrin alpha-5/beta-1 (ITGA5/ITGB1). Partially inhibits adhesion of cells expressing alpha-IIb/beta-3 (ITGA2B/ITGB3), alpha-V/beta-3 (ITGAV/ITGB3), and alpha-4/beta-1 (ITGA4/ITGB1) to appropriate ligands only at concentration higher than 500 nM. Weakly inhibits ADP-induced platelet aggregation. The polypeptide is Disintegrin EMF10A (Eristicophis macmahoni (Leaf-nosed viper)).